Reading from the N-terminus, the 592-residue chain is A-type ATP synthase subunit A (592 aa).

Position 233-240 (233-240) interacts with ATP; it reads GPFGSGKT.

It belongs to the ATPase alpha/beta chains family. Has multiple subunits with at least A(3), B(3), C, D, E, F, H, I and proteolipid K(x).

The protein localises to the cell membrane. The catalysed reaction is ATP + H2O + 4 H(+)(in) = ADP + phosphate + 5 H(+)(out). Its function is as follows. Component of the A-type ATP synthase that produces ATP from ADP in the presence of a proton gradient across the membrane. The A chain is the catalytic subunit. The sequence is that of A-type ATP synthase subunit A from Saccharolobus islandicus (strain Y.G.57.14 / Yellowstone #1) (Sulfolobus islandicus).